A 118-amino-acid polypeptide reads, in one-letter code: Small ribosomal subunit protein uS13 (118 aa).

The disordered stretch occupies residues 91 to 118 (HRRGLPVRGQRTKTNARTRKGPRKPIKK).

The protein belongs to the universal ribosomal protein uS13 family. Part of the 30S ribosomal subunit. Forms a loose heterodimer with protein S19. Forms two bridges to the 50S subunit in the 70S ribosome.

Its function is as follows. Located at the top of the head of the 30S subunit, it contacts several helices of the 16S rRNA. In the 70S ribosome it contacts the 23S rRNA (bridge B1a) and protein L5 of the 50S subunit (bridge B1b), connecting the 2 subunits; these bridges are implicated in subunit movement. Contacts the tRNAs in the A and P-sites. The polypeptide is Small ribosomal subunit protein uS13 (Hamiltonella defensa subsp. Acyrthosiphon pisum (strain 5AT)).